The sequence spans 126 residues: Profilin-3 (126 aa).

Belongs to the profilin family. In terms of assembly, occurs in many kinds of cells as a complex with monomeric actin in a 1:1 ratio.

It is found in the cytoplasm. It localises to the cytoskeleton. In terms of biological role, binds to actin and affects the structure of the cytoskeleton. At high concentrations, profilin prevents the polymerization of actin, whereas it enhances it at low concentrations. By binding to PIP2, it inhibits the formation of IP3 and DG. In Dictyostelium discoideum (Social amoeba), this protein is Profilin-3 (proC).